Here is a 458-residue protein sequence, read N- to C-terminus: Cysteine--tRNA ligase (458 aa).

Residue cysteine 33 participates in Zn(2+) binding. A 'HIGH' region motif is present at residues 35–45 (PTVYDFAHIGN). Positions 221, 246, and 250 each coordinate Zn(2+). A 'KMSKS' region motif is present at residues 279–283 (KMSKS). Residue lysine 282 participates in ATP binding.

Belongs to the class-I aminoacyl-tRNA synthetase family. Monomer. Zn(2+) is required as a cofactor.

It is found in the cytoplasm. It catalyses the reaction tRNA(Cys) + L-cysteine + ATP = L-cysteinyl-tRNA(Cys) + AMP + diphosphate. This chain is Cysteine--tRNA ligase, found in Rhizobium etli (strain ATCC 51251 / DSM 11541 / JCM 21823 / NBRC 15573 / CFN 42).